The sequence spans 74 residues: Sec-independent protein translocase protein TatA (74 aa).

The helical transmembrane segment at 1 to 21 (MGTFSIWHWLIVLLVVVVVFG) threads the bilayer. The interval 50–74 (TAPAGQVANQSTADQTIDVQTKPKG) is disordered. The span at 56–68 (VANQSTADQTIDV) shows a compositional bias: polar residues.

The protein belongs to the TatA/E family. In terms of assembly, the Tat system comprises two distinct complexes: a TatABC complex, containing multiple copies of TatA, TatB and TatC subunits, and a separate TatA complex, containing only TatA subunits. Substrates initially bind to the TatABC complex, which probably triggers association of the separate TatA complex to form the active translocon.

The protein localises to the cell inner membrane. Functionally, part of the twin-arginine translocation (Tat) system that transports large folded proteins containing a characteristic twin-arginine motif in their signal peptide across membranes. TatA could form the protein-conducting channel of the Tat system. The polypeptide is Sec-independent protein translocase protein TatA (Verminephrobacter eiseniae (strain EF01-2)).